The chain runs to 447 residues: UDP-N-acetylmuramoylalanine--D-glutamate ligase (447 aa).

Residue 130–136 coordinates ATP; the sequence is GTSGKTT.

This sequence belongs to the MurCDEF family.

The protein localises to the cytoplasm. It carries out the reaction UDP-N-acetyl-alpha-D-muramoyl-L-alanine + D-glutamate + ATP = UDP-N-acetyl-alpha-D-muramoyl-L-alanyl-D-glutamate + ADP + phosphate + H(+). Its pathway is cell wall biogenesis; peptidoglycan biosynthesis. Functionally, cell wall formation. Catalyzes the addition of glutamate to the nucleotide precursor UDP-N-acetylmuramoyl-L-alanine (UMA). The polypeptide is UDP-N-acetylmuramoylalanine--D-glutamate ligase (Oleidesulfovibrio alaskensis (strain ATCC BAA-1058 / DSM 17464 / G20) (Desulfovibrio alaskensis)).